Reading from the N-terminus, the 235-residue chain is Small ribosomal subunit protein uS3 (235 aa).

Positions 39–107 constitute a KH type-2 domain; that stretch reads VRKFLNKELA…PAQINIAEVK (69 aa). The disordered stretch occupies residues 215 to 235; that stretch reads AQPEQQPADKPKKAPRGKGRK.

This sequence belongs to the universal ribosomal protein uS3 family. Part of the 30S ribosomal subunit. Forms a tight complex with proteins S10 and S14.

Its function is as follows. Binds the lower part of the 30S subunit head. Binds mRNA in the 70S ribosome, positioning it for translation. This chain is Small ribosomal subunit protein uS3, found in Pasteurella multocida (strain Pm70).